The primary structure comprises 102 residues: Large ribosomal subunit protein bL21 (102 aa).

The protein belongs to the bacterial ribosomal protein bL21 family. Part of the 50S ribosomal subunit. Contacts protein L20.

This protein binds to 23S rRNA in the presence of protein L20. The protein is Large ribosomal subunit protein bL21 of Listeria monocytogenes serotype 4b (strain F2365).